A 59-amino-acid chain; its full sequence is Potassium channel toxin alpha-KTx 4.7 (59 aa).

The N-terminal stretch at 1–22 (MKAFYGILIIFILISMLDLSQQ) is a signal peptide. Intrachain disulfides connect C29-C50, C35-C55, and C39-C57. Positions 48 to 55 (GKCMNGKC) are interaction with Ca(2+)-activated K(+) channels.

This sequence belongs to the short scorpion toxin superfamily. Potassium channel inhibitor family. Alpha-KTx 04 subfamily. In terms of tissue distribution, expressed by the venom gland.

It is found in the secreted. In terms of biological role, potently blocks Kv1.1/KCNA1 (85%), Kv1.2/KCNA2 (91%), Kv1.3/KCNA3 (89%), Kv1.6/KCNA6 (94%), and Shaker (97%). The protein is Potassium channel toxin alpha-KTx 4.7 of Tityus stigmurus (Brazilian scorpion).